A 72-amino-acid chain; its full sequence is NAD(P)H-quinone oxidoreductase subunit O (72 aa).

This sequence belongs to the complex I NdhO subunit family. As to quaternary structure, NDH-1 can be composed of about 15 different subunits; different subcomplexes with different compositions have been identified which probably have different functions.

It is found in the cellular thylakoid membrane. The enzyme catalyses a plastoquinone + NADH + (n+1) H(+)(in) = a plastoquinol + NAD(+) + n H(+)(out). It carries out the reaction a plastoquinone + NADPH + (n+1) H(+)(in) = a plastoquinol + NADP(+) + n H(+)(out). NDH-1 shuttles electrons from an unknown electron donor, via FMN and iron-sulfur (Fe-S) centers, to quinones in the respiratory and/or the photosynthetic chain. The immediate electron acceptor for the enzyme in this species is believed to be plastoquinone. Couples the redox reaction to proton translocation, and thus conserves the redox energy in a proton gradient. Cyanobacterial NDH-1 also plays a role in inorganic carbon-concentration. This chain is NAD(P)H-quinone oxidoreductase subunit O, found in Trichodesmium erythraeum (strain IMS101).